Here is a 610-residue protein sequence, read N- to C-terminus: All-trans-retinol 13,14-reductase (610 aa).

Positions 1-18 (MWLPLVLLLAVLLLAVLC) are cleaved as a signal peptide.

The protein belongs to the carotenoid/retinoid oxidoreductase family. CrtISO subfamily. The cofactor is NAD(+). Requires NADP(+) as cofactor. FAD serves as cofactor. Expressed in liver; expression positively correlates with obesity and liver steatosis. Expressed in adipose tissue; expression tends to be decreased in obese versus lean individuals.

It is found in the endoplasmic reticulum membrane. It carries out the reaction all-trans-13,14-dihydroretinol + A = all-trans-retinol + AH2. Catalyzes the saturation of all-trans-retinol to all-trans-13,14-dihydroretinol. Does not exhibit any activity toward all-trans-retinoic acid, nor 9-cis, 11-cis or 13-cis-retinol isomers. May play a role in the metabolism of vitamin A. Independently of retinol conversion, may regulate liver metabolism upstream of MLXIPL/ChREBP. May play a role in adipocyte differentiation. The sequence is that of All-trans-retinol 13,14-reductase (RETSAT) from Homo sapiens (Human).